The primary structure comprises 308 residues: Cytochrome c biogenesis protein CcsA (308 aa).

7 consecutive transmembrane segments (helical) span residues 2-22, 44-64, 71-91, 143-163, 212-232, 247-267, and 273-293; these read IVST…SILI, GMLI…IYLG, LSES…IGYF, MILG…LMVI, VISL…VWAN, WAFI…NINL, and AIVA…VNLV.

This sequence belongs to the CcmF/CycK/Ccl1/NrfE/CcsA family. In terms of assembly, may interact with Ccs1.

It is found in the plastid membrane. In terms of biological role, required during biogenesis of c-type cytochromes (cytochrome c6 and cytochrome f) at the step of heme attachment. This is Cytochrome c biogenesis protein CcsA from Cuscuta reflexa (Southern Asian dodder).